A 273-amino-acid chain; its full sequence is 3-methyl-2-oxobutanoate hydroxymethyltransferase (273 aa).

The Mg(2+) site is built by Asp49 and Asp88. Residues 49 to 50 (DS), Asp88, and Lys118 contribute to the 3-methyl-2-oxobutanoate site. Glu120 provides a ligand contact to Mg(2+). Glu187 functions as the Proton acceptor in the catalytic mechanism.

Belongs to the PanB family. As to quaternary structure, homodecamer; pentamer of dimers. The cofactor is Mg(2+).

Its subcellular location is the cytoplasm. The catalysed reaction is 3-methyl-2-oxobutanoate + (6R)-5,10-methylene-5,6,7,8-tetrahydrofolate + H2O = 2-dehydropantoate + (6S)-5,6,7,8-tetrahydrofolate. It functions in the pathway cofactor biosynthesis; (R)-pantothenate biosynthesis; (R)-pantoate from 3-methyl-2-oxobutanoate: step 1/2. Functionally, catalyzes the reversible reaction in which hydroxymethyl group from 5,10-methylenetetrahydrofolate is transferred onto alpha-ketoisovalerate to form ketopantoate. The chain is 3-methyl-2-oxobutanoate hydroxymethyltransferase from Sinorhizobium fredii (strain NBRC 101917 / NGR234).